The chain runs to 515 residues: 2-isopropylmalate synthase (515 aa).

The Pyruvate carboxyltransferase domain occupies 4 to 266 (ISVFDTTLRD…ETGLILKEIK (263 aa)). Residues Asp-13, His-201, His-203, and Asn-237 each coordinate Mn(2+). Residues 391–515 (ELQTLQVNYG…AEVYGSKVEV (125 aa)) are regulatory domain.

This sequence belongs to the alpha-IPM synthase/homocitrate synthase family. LeuA type 1 subfamily. As to quaternary structure, homodimer. The cofactor is Mn(2+).

Its subcellular location is the cytoplasm. It catalyses the reaction 3-methyl-2-oxobutanoate + acetyl-CoA + H2O = (2S)-2-isopropylmalate + CoA + H(+). Its pathway is amino-acid biosynthesis; L-leucine biosynthesis; L-leucine from 3-methyl-2-oxobutanoate: step 1/4. In terms of biological role, catalyzes the condensation of the acetyl group of acetyl-CoA with 3-methyl-2-oxobutanoate (2-ketoisovalerate) to form 3-carboxy-3-hydroxy-4-methylpentanoate (2-isopropylmalate). This Halalkalibacterium halodurans (strain ATCC BAA-125 / DSM 18197 / FERM 7344 / JCM 9153 / C-125) (Bacillus halodurans) protein is 2-isopropylmalate synthase.